The chain runs to 245 residues: Peroxisome biogenesis protein 19-2 (245 aa).

A disordered region spans residues 17–106 (ALDDFKDLNL…LSSKQQPTGS (90 aa)). Composition is skewed to basic and acidic residues over residues 33 to 44 (VKKEEGDKKETE) and 71 to 92 (AKED…ETVK). A compositionally biased stretch (polar residues) spans 96–105 (SLSSKQQPTG). Cysteine 242 is modified (cysteine methyl ester). Cysteine 242 carries S-farnesyl cysteine lipidation. Residues 243–245 (CVM) constitute a propeptide, removed in mature form.

Belongs to the peroxin-19 family. In terms of assembly, dimer. Interacts with PEX10 (via C-terminus). In terms of processing, may be farnesylated. In terms of tissue distribution, expressed in roots, leaves, flowers, siliques and stems. Highest expression in roots and leaves.

It is found in the cytoplasm. The protein localises to the peroxisome membrane. Its function is as follows. Contributes to morphology determination of peroxisomes, but not to import of peroxisomal matrix proteins. Required for proper post-translational import and stabilization of peroxisomal membrane proteins (PMPs). Acts as a cytosolic import receptor for PMPs and delivers them to the docking factor PEX3 at the peroxisomal membrane for subsequent insertion into the membrane. Acts as a chaperone in stabilizing or maintaining PMPs in the lipid bilayer. This chain is Peroxisome biogenesis protein 19-2 (PEX19-2), found in Arabidopsis thaliana (Mouse-ear cress).